We begin with the raw amino-acid sequence, 150 residues long: MILQGKKVIAIGDRDGIPGPAIEECVKSAGAEIAFSSTECFVUTAAGAMDLEIQQKVKDAAESIGADNLVVVLGGAEAESSGLSAETVTTGDPTYAGPLAGVELGLKVYHVVEDELKAEFDEAIYEDQCGMMEMVLDVDGIKEEMNRVRG.

U43 is a catalytic residue. U43 is a non-standard amino acid (selenocysteine).

It belongs to the GrdA family. In terms of assembly, monomer. Component of the glycine, sarcosine and betaine reductase complexes, together with components B and C.

It carries out the reaction acetyl phosphate + [thioredoxin]-disulfide + NH4(+) + H2O = [thioredoxin]-dithiol + glycine + phosphate + H(+). It catalyses the reaction acetyl phosphate + methylamine + [thioredoxin]-disulfide + H2O = sarcosine + [thioredoxin]-dithiol + phosphate + H(+). The enzyme catalyses acetyl phosphate + trimethylamine + [thioredoxin]-disulfide + H2O = glycine betaine + [thioredoxin]-dithiol + phosphate + H(+). Functionally, in the first step of glycine, betaine and sarcosine reductases, the substrate is bound to component PB via a Schiff base intermediate. Then the PB-activated substrate is nucleophilically attacked by the selenol anion of component PA to transform it to a carboxymethylated selenoether and the respective amine. By action of component PC, acetyl phosphate is formed, leaving component PA in its oxidized state. Finally component PA becomes reduced by the thioredoxin system to start a new catalytic cycle of reductive deamination. This chain is Glycine/sarcosine/betaine reductase complex component A (grdA), found in Gottschalkia purinilytica (Clostridium purinilyticum).